The following is a 389-amino-acid chain: Phospho-N-acetylmuramoyl-pentapeptide-transferase (389 aa).

11 consecutive transmembrane segments (helical) span residues 21–41, 71–91, 97–117, 134–154, 167–187, 190–210, 222–242, 259–279, 286–306, 311–331, and 366–386; these read YITM…LVAG, TPTM…LLWA, FVWV…MDDY, FFWQ…AVSA, WVSS…VPFF, VSYP…IVGT, GLAI…AYVV, AAEL…FLWF, VFMG…IAVI, IVLF…MMQV, and QVVV…LSTL.

Belongs to the glycosyltransferase 4 family. MraY subfamily. Mg(2+) is required as a cofactor.

It localises to the cell inner membrane. It catalyses the reaction UDP-N-acetyl-alpha-D-muramoyl-L-alanyl-gamma-D-glutamyl-meso-2,6-diaminopimeloyl-D-alanyl-D-alanine + di-trans,octa-cis-undecaprenyl phosphate = di-trans,octa-cis-undecaprenyl diphospho-N-acetyl-alpha-D-muramoyl-L-alanyl-D-glutamyl-meso-2,6-diaminopimeloyl-D-alanyl-D-alanine + UMP. Its pathway is cell wall biogenesis; peptidoglycan biosynthesis. Catalyzes the initial step of the lipid cycle reactions in the biosynthesis of the cell wall peptidoglycan: transfers peptidoglycan precursor phospho-MurNAc-pentapeptide from UDP-MurNAc-pentapeptide onto the lipid carrier undecaprenyl phosphate, yielding undecaprenyl-pyrophosphoryl-MurNAc-pentapeptide, known as lipid I. This chain is Phospho-N-acetylmuramoyl-pentapeptide-transferase, found in Bordetella petrii (strain ATCC BAA-461 / DSM 12804 / CCUG 43448).